A 704-amino-acid chain; its full sequence is Elongation factor G 2 (704 aa).

A tr-type G domain is found at 8-290 (ERYRNIGISA…AIIDYLPSPV (283 aa)). Residues 17-24 (AHIDAGKT), 88-92 (DTPGH), and 142-145 (NKMD) contribute to the GTP site.

Belongs to the TRAFAC class translation factor GTPase superfamily. Classic translation factor GTPase family. EF-G/EF-2 subfamily.

It is found in the cytoplasm. Functionally, catalyzes the GTP-dependent ribosomal translocation step during translation elongation. During this step, the ribosome changes from the pre-translocational (PRE) to the post-translocational (POST) state as the newly formed A-site-bound peptidyl-tRNA and P-site-bound deacylated tRNA move to the P and E sites, respectively. Catalyzes the coordinated movement of the two tRNA molecules, the mRNA and conformational changes in the ribosome. The polypeptide is Elongation factor G 2 (Polaromonas sp. (strain JS666 / ATCC BAA-500)).